Here is a 336-residue protein sequence, read N- to C-terminus: UDP-N-acetylmuramoylpentapeptide-lysine N(6)-alanyltransferase (336 aa).

Residues 37-40 (KNNW), Y104, R212, Y216, and Y257 contribute to the substrate site.

The protein belongs to the FemABX family.

The enzyme catalyses UDP-N-acetyl-alpha-D-muramoyl-L-alanyl-gamma-D-glutamyl-L-lysyl-D-alanyl-D-alanine + L-alanyl-tRNA(Ala) = UDP-N-acetyl-alpha-D-muramoyl-L-alanyl-gamma-D-glutamyl-N(6)-(L-alanyl)-L-lysyl-D-alanyl-D-alanine + tRNA(Ala) + H(+). Its function is as follows. Involved in the synthesis of the bacterial cell wall. Catalyzes the addition of alanine into the interchain peptide bridge of peptidoglycan precursor using aminoacyl-tRNA(Ala) as amino acid donor. This alanine is added to the epsilon-amino group of the L-lysine of the peptidoglycan UDP-N-acetyl-alpha-D-muramoyl-L-alanyl-D-glutamyl-L-lysyl-D-alanyl-D-alanine, in a ribosome-independent mechanism. Specific for UDP-N-acetyl-muramoyl-pentapeptide. Has no activity toward UDP-N-acetyl-muramoyl-tetrapeptide or UDP-N-acetyl-muramoyl-tripeptide. Also acts on L-seryl-tRNA(Ser). The chain is UDP-N-acetylmuramoylpentapeptide-lysine N(6)-alanyltransferase from Weissella viridescens (Lactobacillus viridescens).